Here is a 149-residue protein sequence, read N- to C-terminus: Ribonuclease pancreatic (149 aa).

A signal peptide spans methionine 1–glycine 25. The substrate site is built by lysine 32 and arginine 35. The active-site Proton acceptor is histidine 37. 4 disulfide bridges follow: cysteine 51–cysteine 109, cysteine 65–cysteine 120, cysteine 83–cysteine 135, and cysteine 90–cysteine 97. The N-linked (GlcNAc...) asparagine glycan is linked to asparagine 59. Position 66 to 70 (lysine 66 to threonine 70) interacts with substrate. N-linked (GlcNAc...) asparagine glycosylation occurs at asparagine 87. The substrate site is built by lysine 91 and arginine 110. Residue histidine 144 is the Proton donor of the active site.

Belongs to the pancreatic ribonuclease family. Monomer. Interacts with and forms tight 1:1 complexes with RNH1. Dimerization of two such complexes may occur. Interaction with RNH1 inhibits this protein. In terms of tissue distribution, pancreas.

It is found in the secreted. The enzyme catalyses an [RNA] containing cytidine + H2O = an [RNA]-3'-cytidine-3'-phosphate + a 5'-hydroxy-ribonucleotide-3'-[RNA].. It carries out the reaction an [RNA] containing uridine + H2O = an [RNA]-3'-uridine-3'-phosphate + a 5'-hydroxy-ribonucleotide-3'-[RNA].. Its function is as follows. Endonuclease that catalyzes the cleavage of RNA on the 3' side of pyrimidine nucleotides. Acts on single-stranded and double-stranded RNA. In Abrothrix jelskii (Jelski's altiplano mouse), this protein is Ribonuclease pancreatic (RNASE1).